The sequence spans 540 residues: Chaperonin GroEL 1 (540 aa).

Residues 30 to 33 (TLGP), Lys-51, 87 to 91 (DGTTT), Gly-415, 480 to 482 (NAA), and Asp-496 contribute to the ATP site.

The protein belongs to the chaperonin (HSP60) family. As to quaternary structure, forms a cylinder of 14 subunits composed of two heptameric rings stacked back-to-back. Interacts with the co-chaperonin GroES.

The protein localises to the cytoplasm. The enzyme catalyses ATP + H2O + a folded polypeptide = ADP + phosphate + an unfolded polypeptide.. Its function is as follows. Together with its co-chaperonin GroES, plays an essential role in assisting protein folding. The GroEL-GroES system forms a nano-cage that allows encapsulation of the non-native substrate proteins and provides a physical environment optimized to promote and accelerate protein folding. This chain is Chaperonin GroEL 1, found in Bradyrhizobium diazoefficiens (strain JCM 10833 / BCRC 13528 / IAM 13628 / NBRC 14792 / USDA 110).